A 463-amino-acid polypeptide reads, in one-letter code: L-seryl-tRNA(Sec) selenium transferase (463 aa).

Lysine 295 carries the post-translational modification N6-(pyridoxal phosphate)lysine.

This sequence belongs to the SelA family. In terms of assembly, homodecamer; pentamer of dimers. Binds only one seryl-tRNA(Sec) per dimer. Requires pyridoxal 5'-phosphate as cofactor.

It localises to the cytoplasm. The catalysed reaction is L-seryl-tRNA(Sec) + selenophosphate + H(+) = L-selenocysteinyl-tRNA(Sec) + phosphate. It functions in the pathway aminoacyl-tRNA biosynthesis; selenocysteinyl-tRNA(Sec) biosynthesis; selenocysteinyl-tRNA(Sec) from L-seryl-tRNA(Sec) (bacterial route): step 1/1. In terms of biological role, converts seryl-tRNA(Sec) to selenocysteinyl-tRNA(Sec) required for selenoprotein biosynthesis. This Escherichia coli O45:K1 (strain S88 / ExPEC) protein is L-seryl-tRNA(Sec) selenium transferase.